The following is a 621-amino-acid chain: tRNA uridine 5-carboxymethylaminomethyl modification enzyme MnmG (621 aa).

Residue 8 to 13 participates in FAD binding; sequence GAGHAG. Residues 199 to 227 are disordered; sequence PRIDRRSVDYSRVEEQKGDENPPPFSFST. A compositionally biased stretch (basic and acidic residues) spans 200 to 218; that stretch reads RIDRRSVDYSRVEEQKGDE. NAD(+) is bound at residue 269–283; the sequence is GPRYCPSIEDKIFRF.

The protein belongs to the MnmG family. In terms of assembly, homodimer. Heterotetramer of two MnmE and two MnmG subunits. The cofactor is FAD.

Its subcellular location is the cytoplasm. In terms of biological role, NAD-binding protein involved in the addition of a carboxymethylaminomethyl (cmnm) group at the wobble position (U34) of certain tRNAs, forming tRNA-cmnm(5)s(2)U34. This is tRNA uridine 5-carboxymethylaminomethyl modification enzyme MnmG from Chlorobium luteolum (strain DSM 273 / BCRC 81028 / 2530) (Pelodictyon luteolum).